The following is a 246-amino-acid chain: Pyridoxine 5'-phosphate synthase (246 aa).

Asparagine 6 contributes to the 3-amino-2-oxopropyl phosphate binding site. 8–9 (DH) provides a ligand contact to 1-deoxy-D-xylulose 5-phosphate. A 3-amino-2-oxopropyl phosphate-binding site is contributed by arginine 17. Histidine 49 acts as the Proton acceptor in catalysis. The 1-deoxy-D-xylulose 5-phosphate site is built by arginine 51 and histidine 56. Glutamate 76 acts as the Proton acceptor in catalysis. 1-deoxy-D-xylulose 5-phosphate is bound at residue threonine 106. Histidine 196 functions as the Proton donor in the catalytic mechanism. 3-amino-2-oxopropyl phosphate-binding positions include glycine 197 and 219–220 (GH).

This sequence belongs to the PNP synthase family. As to quaternary structure, homooctamer; tetramer of dimers.

It localises to the cytoplasm. The enzyme catalyses 3-amino-2-oxopropyl phosphate + 1-deoxy-D-xylulose 5-phosphate = pyridoxine 5'-phosphate + phosphate + 2 H2O + H(+). The protein operates within cofactor biosynthesis; pyridoxine 5'-phosphate biosynthesis; pyridoxine 5'-phosphate from D-erythrose 4-phosphate: step 5/5. In terms of biological role, catalyzes the complicated ring closure reaction between the two acyclic compounds 1-deoxy-D-xylulose-5-phosphate (DXP) and 3-amino-2-oxopropyl phosphate (1-amino-acetone-3-phosphate or AAP) to form pyridoxine 5'-phosphate (PNP) and inorganic phosphate. This Akkermansia muciniphila (strain ATCC BAA-835 / DSM 22959 / JCM 33894 / BCRC 81048 / CCUG 64013 / CIP 107961 / Muc) protein is Pyridoxine 5'-phosphate synthase.